Reading from the N-terminus, the 178-residue chain is NAD(P)H-quinone oxidoreductase subunit 6, chloroplastic (178 aa).

A run of 5 helical transmembrane segments spans residues 10 to 30, 33 to 53, 64 to 84, 100 to 120, and 148 to 168; these read LIVA…VIFF, IVYA…LYLF, ILIY…LISL, ISAF…LQTP, and LLPF…AVSI.

Belongs to the complex I subunit 6 family. As to quaternary structure, NDH is composed of at least 16 different subunits, 5 of which are encoded in the nucleus.

Its subcellular location is the plastid. It is found in the chloroplast thylakoid membrane. It catalyses the reaction a plastoquinone + NADH + (n+1) H(+)(in) = a plastoquinol + NAD(+) + n H(+)(out). It carries out the reaction a plastoquinone + NADPH + (n+1) H(+)(in) = a plastoquinol + NADP(+) + n H(+)(out). Its function is as follows. NDH shuttles electrons from NAD(P)H:plastoquinone, via FMN and iron-sulfur (Fe-S) centers, to quinones in the photosynthetic chain and possibly in a chloroplast respiratory chain. The immediate electron acceptor for the enzyme in this species is believed to be plastoquinone. Couples the redox reaction to proton translocation, and thus conserves the redox energy in a proton gradient. The protein is NAD(P)H-quinone oxidoreductase subunit 6, chloroplastic (ndhG) of Chara vulgaris (Common stonewort).